The sequence spans 82 residues: Small ribosomal subunit protein uS17 (82 aa).

Belongs to the universal ribosomal protein uS17 family. As to quaternary structure, part of the 30S ribosomal subunit.

Its function is as follows. One of the primary rRNA binding proteins, it binds specifically to the 5'-end of 16S ribosomal RNA. In Shewanella denitrificans (strain OS217 / ATCC BAA-1090 / DSM 15013), this protein is Small ribosomal subunit protein uS17.